A 419-amino-acid chain; its full sequence is Acyl-[acyl-carrier-protein] hydrolase FATB1, chloroplastic (419 aa).

The N-terminal 50 residues, 1-50 (MVAAAATSAFFPVPAPGTSPKPGKSGNWPSSLSPTFKPKSIPNGGFQVKA), are a transit peptide targeting the chloroplast. Residues 1 to 84 (MVAAAATSAF…DTSSSPPPRA (84 aa)) are disordered. The segment covering 61-78 (SAVNLKSGSLNTQEDTSS) has biased composition (polar residues). Residues Asn-315, His-317, and Cys-352 contribute to the active site. The interval 390–419 (SRTEWRPKNAGTNGAISTSTAKTSNGNSVS) is disordered. The span at 399–419 (AGTNGAISTSTAKTSNGNSVS) shows a compositional bias: polar residues.

The protein belongs to the acyl-ACP thioesterase family.

It is found in the plastid. Its subcellular location is the chloroplast. The enzyme catalyses octanoyl-[ACP] + H2O = octanoate + holo-[ACP] + H(+). The catalysed reaction is decanoyl-[ACP] + H2O = decanoate + holo-[ACP] + H(+). In terms of biological role, plays an essential role in chain termination during de novo fatty acid synthesis. Possesses thioesterase activity for short chain acyl-ACPs. Substrate preference is 8:0 &gt; 10:0. This chain is Acyl-[acyl-carrier-protein] hydrolase FATB1, chloroplastic, found in Cuphea viscosissima (Blue waxweed).